The chain runs to 168 residues: Peptide deformylase 2 (168 aa).

C91 and H133 together coordinate Fe cation. E134 is an active-site residue. H137 contributes to the Fe cation binding site.

Belongs to the polypeptide deformylase family. Fe(2+) is required as a cofactor.

It carries out the reaction N-terminal N-formyl-L-methionyl-[peptide] + H2O = N-terminal L-methionyl-[peptide] + formate. Removes the formyl group from the N-terminal Met of newly synthesized proteins. Requires at least a dipeptide for an efficient rate of reaction. N-terminal L-methionine is a prerequisite for activity but the enzyme has broad specificity at other positions. This Vibrio vulnificus (strain CMCP6) protein is Peptide deformylase 2.